Here is a 249-residue protein sequence, read N- to C-terminus: Probable transcriptional regulatory protein Csal_1845 (249 aa).

It belongs to the TACO1 family.

The protein localises to the cytoplasm. In Chromohalobacter salexigens (strain ATCC BAA-138 / DSM 3043 / CIP 106854 / NCIMB 13768 / 1H11), this protein is Probable transcriptional regulatory protein Csal_1845.